Reading from the N-terminus, the 426-residue chain is Enolase (426 aa).

Glutamine 163 is a binding site for (2R)-2-phosphoglycerate. Residue glutamate 205 is the Proton donor of the active site. Positions 242, 286, and 313 each coordinate Mg(2+). Positions 338, 367, 368, and 389 each coordinate (2R)-2-phosphoglycerate. The Proton acceptor role is filled by lysine 338.

It belongs to the enolase family. Mg(2+) serves as cofactor.

The protein localises to the cytoplasm. Its subcellular location is the secreted. It localises to the cell surface. The catalysed reaction is (2R)-2-phosphoglycerate = phosphoenolpyruvate + H2O. It functions in the pathway carbohydrate degradation; glycolysis; pyruvate from D-glyceraldehyde 3-phosphate: step 4/5. Its function is as follows. Catalyzes the reversible conversion of 2-phosphoglycerate (2-PG) into phosphoenolpyruvate (PEP). It is essential for the degradation of carbohydrates via glycolysis. The sequence is that of Enolase from Helicobacter pylori (strain P12).